We begin with the raw amino-acid sequence, 270 residues long: uncharacterized protein (270 aa).

Positions 43 to 112 (CTANDIKRKY…REEYDRFGIH (70 aa)) constitute a J domain. The segment at 239–270 (EQSKQIPTQQKPSSLPPPERALPAPTMPTPSS) is disordered. Residues 242 to 251 (KQIPTQQKPS) are compositionally biased toward polar residues. The segment covering 252–270 (SLPPPERALPAPTMPTPSS) has biased composition (pro residues).

This is an uncharacterized protein from Schizosaccharomyces pombe (strain 972 / ATCC 24843) (Fission yeast).